Here is a 328-residue protein sequence, read N- to C-terminus: Glycerol-3-phosphate dehydrogenase [NAD(P)+] (328 aa).

NADPH is bound by residues Trp15, Arg35, Arg36, and Lys105. 2 residues coordinate sn-glycerol 3-phosphate: Lys105 and Gly131. Ala135 contributes to the NADPH binding site. Positions 186, 239, 249, 250, and 251 each coordinate sn-glycerol 3-phosphate. The active-site Proton acceptor is the Lys186. Position 250 (Arg250) interacts with NADPH. NADPH is bound by residues Val270 and Glu272.

It belongs to the NAD-dependent glycerol-3-phosphate dehydrogenase family.

The protein resides in the cytoplasm. It catalyses the reaction sn-glycerol 3-phosphate + NAD(+) = dihydroxyacetone phosphate + NADH + H(+). It carries out the reaction sn-glycerol 3-phosphate + NADP(+) = dihydroxyacetone phosphate + NADPH + H(+). Its pathway is membrane lipid metabolism; glycerophospholipid metabolism. Its function is as follows. Catalyzes the reduction of the glycolytic intermediate dihydroxyacetone phosphate (DHAP) to sn-glycerol 3-phosphate (G3P), the key precursor for phospholipid synthesis. This Deinococcus radiodurans (strain ATCC 13939 / DSM 20539 / JCM 16871 / CCUG 27074 / LMG 4051 / NBRC 15346 / NCIMB 9279 / VKM B-1422 / R1) protein is Glycerol-3-phosphate dehydrogenase [NAD(P)+].